The following is a 780-amino-acid chain: Molybdenum cofactor sulfurase (780 aa).

An N6-(pyridoxal phosphate)lysine modification is found at K246. Residue C413 is part of the active site. Positions L635–E780 constitute an MOSC domain. S734 carries the phosphoserine modification.

Belongs to the class-V pyridoxal-phosphate-dependent aminotransferase family. MOCOS subfamily. Pyridoxal 5'-phosphate serves as cofactor.

The enzyme catalyses Mo-molybdopterin + L-cysteine + AH2 = thio-Mo-molybdopterin + L-alanine + A + H2O. Its function is as follows. Sulfurates the molybdenum cofactor. Sulfation of molybdenum is essential for xanthine dehydrogenase (XDH) and aldehyde oxidase (ADO) enzymes in which molybdenum cofactor is liganded by 1 oxygen and 1 sulfur atom in active form. The chain is Molybdenum cofactor sulfurase from Drosophila yakuba (Fruit fly).